Reading from the N-terminus, the 130-residue chain is Small ribosomal subunit protein uS9 (130 aa).

A disordered region spans residues Arg109 to Arg130.

The protein belongs to the universal ribosomal protein uS9 family.

The protein is Small ribosomal subunit protein uS9 of Malacoplasma penetrans (strain HF-2) (Mycoplasma penetrans).